The sequence spans 277 residues: Digeranylgeranylglyceryl phosphate synthase (277 aa).

8 helical membrane-spanning segments follow: residues 16–36 (LLAG…LPEL), 40–60 (ILVF…NDYF), 83–105 (AALW…INIW), 107–124 (FLLA…AWKL), 146–166 (GAIA…AFLV), 202–222 (VGAL…KAGI), 224–244 (LGYL…FLIL), and 256–276 (QILL…ASLV).

The protein belongs to the UbiA prenyltransferase family. DGGGP synthase subfamily. It depends on Mg(2+) as a cofactor.

Its subcellular location is the cell membrane. The enzyme catalyses sn-3-O-(geranylgeranyl)glycerol 1-phosphate + (2E,6E,10E)-geranylgeranyl diphosphate = 2,3-bis-O-(geranylgeranyl)-sn-glycerol 1-phosphate + diphosphate. Its pathway is membrane lipid metabolism; glycerophospholipid metabolism. Functionally, prenyltransferase that catalyzes the transfer of the geranylgeranyl moiety of geranylgeranyl diphosphate (GGPP) to the C2 hydroxyl of (S)-3-O-geranylgeranylglyceryl phosphate (GGGP). This reaction is the second ether-bond-formation step in the biosynthesis of archaeal membrane lipids. This is Digeranylgeranylglyceryl phosphate synthase from Thermococcus kodakarensis (strain ATCC BAA-918 / JCM 12380 / KOD1) (Pyrococcus kodakaraensis (strain KOD1)).